The sequence spans 394 residues: MAKAKFERTKPHVNVGTIGHVDHGKTTLTAAITTVLAKTYGGAASAFDQIDNAPEERERGITISTSHVEYDTPTRHYAHVDCPGHADYVKNMITGAAQMDGAILVVAATDGPMPQTREHILLGRQVGVPFMVVFMNKCDMVDDEELLELVEMEVRELLSEYEFPGDDLPVIQGSALKALEGEEQWEAKIIELAEALDSYIPEPERDIDKPFLLPIEDVFSISGRGTVVTGRVERGIVNTGDAVEIVGMKDTTTSTVTGVEMFRKLLDEGRAGENIGALLRGTKREDVERGQVLAKPGSINPHTQFEAEVYVLSKDEGGRHTPFFKGYRPQFYFRTTDVTGAVELPEGVEMVMPGDNLKFVVELIAPIAMDEGLRFAIREGGRTVGAGVVAKIIA.

A tr-type G domain is found at 10–204; sequence KPHVNVGTIG…ALDSYIPEPE (195 aa). The interval 19 to 26 is G1; the sequence is GHVDHGKT. 19–26 is a binding site for GTP; it reads GHVDHGKT. Thr26 is a binding site for Mg(2+). Residues 60 to 64 are G2; that stretch reads GITIS. Residues 81-84 are G3; that stretch reads DCPG. GTP-binding positions include 81–85 and 136–139; these read DCPGH and NKCD. Positions 136–139 are G4; that stretch reads NKCD. The segment at 174–176 is G5; that stretch reads SAL.

The protein belongs to the TRAFAC class translation factor GTPase superfamily. Classic translation factor GTPase family. EF-Tu/EF-1A subfamily. Monomer.

It is found in the cytoplasm. It catalyses the reaction GTP + H2O = GDP + phosphate + H(+). In terms of biological role, GTP hydrolase that promotes the GTP-dependent binding of aminoacyl-tRNA to the A-site of ribosomes during protein biosynthesis. The sequence is that of Elongation factor Tu from Pseudoalteromonas atlantica (strain T6c / ATCC BAA-1087).